Here is a 761-residue protein sequence, read N- to C-terminus: 1,4-alpha-glucan branching enzyme GlgB (761 aa).

The active-site Nucleophile is the D431. Catalysis depends on E484, which acts as the Proton donor.

Belongs to the glycosyl hydrolase 13 family. GlgB subfamily. Monomer.

It carries out the reaction Transfers a segment of a (1-&gt;4)-alpha-D-glucan chain to a primary hydroxy group in a similar glucan chain.. It functions in the pathway glycan biosynthesis; glycogen biosynthesis. Its function is as follows. Catalyzes the formation of the alpha-1,6-glucosidic linkages in glycogen by scission of a 1,4-alpha-linked oligosaccharide from growing alpha-1,4-glucan chains and the subsequent attachment of the oligosaccharide to the alpha-1,6 position. This is 1,4-alpha-glucan branching enzyme GlgB from Synechococcus sp. (strain WH7803).